We begin with the raw amino-acid sequence, 349 residues long: Ion-translocating oxidoreductase complex subunit D (349 aa).

3 helical membrane-spanning segments follow: residues 20 to 42 (VMQRVILCLLPGLVVQCAFFGWG), 77 to 99 (SAMLTAILIGVAIPPLAPWWMIV), and 124 to 144 (AMAAYVLLLVSFPVQMTTWIA). FMN phosphoryl threonine is present on Thr185. Transmembrane regions (helical) follow at residues 212–232 (STGVGWFWVNLAYLAGGLVLL), 239–259 (WHISTGVLLGLFVASSIGFLL), 265–285 (ASPLMHLFSGATMLAAFFIAT), 291–311 (ATSPRGRIIFGALIGVLVYII), and 315–335 (GGYPDAFAFAVLLANLCAPFI).

The protein belongs to the NqrB/RnfD family. As to quaternary structure, the complex is composed of six subunits: RnfA, RnfB, RnfC, RnfD, RnfE and RnfG. FMN serves as cofactor.

It is found in the cell inner membrane. Part of a membrane-bound complex that couples electron transfer with translocation of ions across the membrane. The chain is Ion-translocating oxidoreductase complex subunit D from Shewanella baltica (strain OS195).